The following is a 280-amino-acid chain: 4-diphosphocytidyl-2-C-methyl-D-erythritol kinase (280 aa).

K9 is an active-site residue. Residue 92-102 (PMGGGLGGGSS) coordinates ATP. D134 is a catalytic residue.

Belongs to the GHMP kinase family. IspE subfamily.

It catalyses the reaction 4-CDP-2-C-methyl-D-erythritol + ATP = 4-CDP-2-C-methyl-D-erythritol 2-phosphate + ADP + H(+). Its pathway is isoprenoid biosynthesis; isopentenyl diphosphate biosynthesis via DXP pathway; isopentenyl diphosphate from 1-deoxy-D-xylulose 5-phosphate: step 3/6. Functionally, catalyzes the phosphorylation of the position 2 hydroxy group of 4-diphosphocytidyl-2C-methyl-D-erythritol. This Nitrosococcus oceani (strain ATCC 19707 / BCRC 17464 / JCM 30415 / NCIMB 11848 / C-107) protein is 4-diphosphocytidyl-2-C-methyl-D-erythritol kinase.